Consider the following 336-residue polypeptide: HTH-type transcriptional repressor PurR (336 aa).

Positions 2-56 constitute an HTH lacI-type domain; that stretch reads ATIKDVAKMAGVSTTTVSHVINKTRFVAKDTEEAVLSAIKQLNYSPSAVARSLKV. Positions 4–23 form a DNA-binding region, H-T-H motif; sequence IKDVAKMAGVSTTTVSHVIN. Residues 48 to 56 mediate DNA binding; sequence SAVARSLKV. Positions 73, 188, 190, 219, and 273 each coordinate hypoxanthine.

In terms of assembly, homodimer.

It participates in purine metabolism; purine nucleotide biosynthesis [regulation]. Functionally, is the main repressor of the genes involved in the de novo synthesis of purine nucleotides, regulating purB, purC, purEK, purF, purHD, purL, purMN and guaBA expression. PurR is allosterically activated to bind its cognate DNA by binding the purine corepressors, hypoxanthine or guanine, thereby effecting transcription repression. This chain is HTH-type transcriptional repressor PurR, found in Haemophilus influenzae (strain PittGG).